Consider the following 141-residue polypeptide: Lutropin subunit beta (141 aa).

The signal sequence occupies residues 1–20 (MEMLQGLLLWLLLNVGGVWA). 6 cysteine pairs are disulfide-bonded: Cys-29–Cys-77, Cys-43–Cys-92, Cys-46–Cys-130, Cys-54–Cys-108, Cys-58–Cys-110, and Cys-113–Cys-120. Asn-33 is a glycosylation site (N-linked (GlcNAc...) asparagine).

This sequence belongs to the glycoprotein hormones subunit beta family. Heterodimer of a common alpha chain and a unique beta chain which confers biological specificity to thyrotropin, lutropin, follitropin and gonadotropin.

The protein localises to the secreted. Its function is as follows. Promotes spermatogenesis and ovulation by stimulating the testes and ovaries to synthesize steroids. The chain is Lutropin subunit beta (LHB) from Ailurus fulgens (Himalayan red panda).